Consider the following 538-residue polypeptide: Putative outer membrane porin BglH (538 aa).

The N-terminal stretch at 1–25 (MFRQNLITSAILLMAPLAFSAQSLA) is a signal peptide. The tract at residues 52–82 (KDEEKKKYTPATVNRSVSTNDQGYAANPFPT) is disordered. The span at 62–73 (ATVNRSVSTNDQ) shows a compositional bias: polar residues.

It belongs to the porin LamB (TC 1.B.3) family.

Its subcellular location is the cell outer membrane. Functionally, may be a sugar porin with a broad carbohydrate specificity. This chain is Putative outer membrane porin BglH (bglH), found in Shigella flexneri.